Reading from the N-terminus, the 109-residue chain is MIKLKVKKGDEVIVITGKHKGKKGKILKVFPEDSKVIVAGVNLVKKHTKPNQMSEGGIRTKELPIHISNIAHIDPKTGRPTKVVFKFLEDGSKVRVAKKSGEIIGKEGK.

It belongs to the universal ribosomal protein uL24 family. Part of the 50S ribosomal subunit.

One of two assembly initiator proteins, it binds directly to the 5'-end of the 23S rRNA, where it nucleates assembly of the 50S subunit. Functionally, one of the proteins that surrounds the polypeptide exit tunnel on the outside of the subunit. This is Large ribosomal subunit protein uL24 from Rickettsia canadensis (strain McKiel).